Here is a 525-residue protein sequence, read N- to C-terminus: GMP synthase [glutamine-hydrolyzing] (525 aa).

The 199-residue stretch at 9–207 (RILILDFGSQ…VRDICQCEAL (199 aa)) folds into the Glutamine amidotransferase type-1 domain. Cysteine 86 (nucleophile) is an active-site residue. Residues histidine 181 and glutamate 183 contribute to the active site. The GMPS ATP-PPase domain occupies 208 to 400 (WTPAKIIDDA…LGLPYDMLYR (193 aa)). Position 235-241 (235-241 (SGGVDSS)) interacts with ATP.

As to quaternary structure, homodimer.

The enzyme catalyses XMP + L-glutamine + ATP + H2O = GMP + L-glutamate + AMP + diphosphate + 2 H(+). The protein operates within purine metabolism; GMP biosynthesis; GMP from XMP (L-Gln route): step 1/1. Its function is as follows. Catalyzes the synthesis of GMP from XMP. In Shigella boydii serotype 4 (strain Sb227), this protein is GMP synthase [glutamine-hydrolyzing].